A 118-amino-acid polypeptide reads, in one-letter code: Ig heavy chain V region X24 (118 aa).

Positions 1–111 constitute an Ig-like domain; that stretch reads EVKLLESGGG…GYFDYWGQGT (111 aa).

This chain is Ig heavy chain V region X24, found in Mus musculus (Mouse).